Consider the following 25-residue polypeptide: Antimicrobial peptide scolopin-2 (25 aa).

In terms of tissue distribution, expressed by the venom gland.

It localises to the secreted. Functionally, antimicrobial peptide against both Gram-positive, -negative and yeast. Also induces histamine release by mast cells and shows moderate hemolytic activities against both human and rabbit red cells. This is Antimicrobial peptide scolopin-2 from Scolopendra mutilans (Chinese red-headed centipede).